The primary structure comprises 125 residues: Methylglyoxal synthase (125 aa).

The 125-residue stretch at 1 to 125 (MTERLRIALI…TAEKLIKALD (125 aa)) folds into the MGS-like domain. Substrate-binding positions include His-12, Lys-16, 38–41 (TGTT), and 59–60 (SG). Asp-65 acts as the Proton donor/acceptor in catalysis. His-92 provides a ligand contact to substrate.

This sequence belongs to the methylglyoxal synthase family.

The enzyme catalyses dihydroxyacetone phosphate = methylglyoxal + phosphate. Its function is as follows. Catalyzes the formation of methylglyoxal from dihydroxyacetone phosphate. This chain is Methylglyoxal synthase, found in Brucella anthropi (strain ATCC 49188 / DSM 6882 / CCUG 24695 / JCM 21032 / LMG 3331 / NBRC 15819 / NCTC 12168 / Alc 37) (Ochrobactrum anthropi).